The following is a 59-amino-acid chain: MDKTRAQEIISSPNMISVTYNGKEIYIENVNENTQTANIHLLNKPDKKQEVPLNNLVEH.

The protein belongs to the SspH family.

The protein resides in the spore core. This is Small, acid-soluble spore protein H from Alkaliphilus metalliredigens (strain QYMF).